The sequence spans 368 residues: Endophilin-A2 (368 aa).

A membrane-binding amphipathic helix region spans residues 1 to 21 (MSVAGLKKQFYKASQLVSEKV). In terms of domain architecture, BAR spans 18-249 (SEKVGGAEGT…LKRRMREASS (232 aa)). The segment at 60–87 (PNPASRAKLTMLNTVSKIRGQVKNPGYP) is required for dimerization upon membrane association. A coiled-coil region spans residues 145 to 250 (NLCEKDLKEI…KRRMREASSR (106 aa)). Residues 218–254 (LVDAQLDYHRQAVQILDELAEKLKRRMREASSRPKRE) form an interaction with ARC region. Positions 244 to 308 (MREASSRPKR…PSRSMPPLDQ (65 aa)) are disordered. The segment covering 245–263 (REASSRPKREYKPKPREPF) has biased composition (basic and acidic residues). Residues Ser-288 and Ser-292 each carry the phosphoserine modification. Thr-298 carries the post-translational modification Phosphothreonine. One can recognise an SH3 domain in the interval 306 to 365 (LDQPSCKALYDFEPENDGELGFHEGDVITLTNQIDENWYEGMLDGQSGFFPLSYVEVLVP). Tyr-315 is modified (phosphotyrosine).

The protein belongs to the endophilin family. In terms of assembly, interacts with ARC. Interacts with SYNJ1 and DNM1. Interacts with PDCD6IP. Interacts with BIN2. In terms of tissue distribution, ubiquitous. Higher expression in pancreas, placenta, prostate, testis and uterus.

The protein resides in the cytoplasm. The protein localises to the early endosome membrane. It is found in the cell projection. Its subcellular location is the podosome. In terms of biological role, implicated in endocytosis. May recruit other proteins to membranes with high curvature. This chain is Endophilin-A2 (SH3GL1), found in Homo sapiens (Human).